The chain runs to 466 residues: Ribulose bisphosphate carboxylase large chain (466 aa).

K5 is modified (N6,N6,N6-trimethyllysine). The substrate site is built by N114 and T164. K166 (proton acceptor) is an active-site residue. K168 is a binding site for substrate. K192, D194, and E195 together coordinate Mg(2+). K192 carries the N6-carboxylysine modification. The active-site Proton acceptor is H285. Substrate contacts are provided by R286, H318, and S370.

Belongs to the RuBisCO large chain family. Type I subfamily. As to quaternary structure, heterohexadecamer of 8 large chains and 8 small chains; disulfide-linked. The disulfide link is formed within the large subunit homodimers. Requires Mg(2+) as cofactor. The disulfide bond which can form in the large chain dimeric partners within the hexadecamer appears to be associated with oxidative stress and protein turnover.

The protein localises to the plastid. Its subcellular location is the chloroplast. It carries out the reaction 2 (2R)-3-phosphoglycerate + 2 H(+) = D-ribulose 1,5-bisphosphate + CO2 + H2O. The enzyme catalyses D-ribulose 1,5-bisphosphate + O2 = 2-phosphoglycolate + (2R)-3-phosphoglycerate + 2 H(+). Its function is as follows. RuBisCO catalyzes two reactions: the carboxylation of D-ribulose 1,5-bisphosphate, the primary event in carbon dioxide fixation, as well as the oxidative fragmentation of the pentose substrate in the photorespiration process. Both reactions occur simultaneously and in competition at the same active site. The sequence is that of Ribulose bisphosphate carboxylase large chain from Vitis aestivalis (Grape).